Reading from the N-terminus, the 326-residue chain is Pyruvate dehydrogenase E1 component subunit beta (326 aa).

Residue glutamate 59 participates in thiamine diphosphate binding.

Heterodimer of an alpha and a beta chain. Thiamine diphosphate is required as a cofactor.

It catalyses the reaction N(6)-[(R)-lipoyl]-L-lysyl-[protein] + pyruvate + H(+) = N(6)-[(R)-S(8)-acetyldihydrolipoyl]-L-lysyl-[protein] + CO2. Functionally, the pyruvate dehydrogenase complex catalyzes the overall conversion of pyruvate to acetyl-CoA and CO(2). It contains multiple copies of three enzymatic components: pyruvate dehydrogenase (E1), dihydrolipoamide acetyltransferase (E2) and lipoamide dehydrogenase (E3). In Rickettsia felis (strain ATCC VR-1525 / URRWXCal2) (Rickettsia azadi), this protein is Pyruvate dehydrogenase E1 component subunit beta (pdhB).